Reading from the N-terminus, the 368-residue chain is L-cysteine desulfhydrase Cds1 (368 aa).

K67 carries the post-translational modification N6-(pyridoxal phosphate)lysine. Residues 203 to 207 (GTGGT) and S299 each bind pyridoxal 5'-phosphate.

Belongs to the cysteine synthase/cystathionine beta-synthase family. Cds1 subfamily. Requires pyridoxal 5'-phosphate as cofactor.

The protein localises to the cytoplasm. The enzyme catalyses L-cysteine + H2O = hydrogen sulfide + pyruvate + NH4(+) + H(+). A cysteine desulfhydrase that generates hydrogen sulfide, H(2)S. The H(2)S produced by this enzyme stimulates respiration in M.tuberculosis, mediated primarily via cytochrome bd with a lesser contribution from cytochrome bc1/aa3. H(2)S modulates the balance between respiration and glycolysis, and also contributes to redox homeostasis. Probably eliminates toxic levels of Cys (which can induce oxidative stress). This Mycobacterium tuberculosis (strain ATCC 25177 / H37Ra) protein is L-cysteine desulfhydrase Cds1.